A 235-amino-acid chain; its full sequence is MFNDKIIKEMFFARLHLGHFSTKWNPKMKKYVFCKQNGKYIIDLIQTVYYLKKVCNFIKKLSIEGKKILFVSARMLIVDKLKHFANVTKSFYITEDWLGGTFTNWITTKGCIDKLNYYSVDGLKLYDSLTKRERLISRKQQSKLAKYYFGIKQMKKIPDVVFLIGQSDLKKAIGECLKLNVPTISILDTDCDPTMTNFFIPANDDSISSIFFILDFVKYYMLKGGKKISKRLVFN.

The protein belongs to the universal ribosomal protein uS2 family.

It is found in the plastid. In Euglena longa (Euglenophycean alga), this protein is Small ribosomal subunit protein uS2c (rps2).